Reading from the N-terminus, the 395-residue chain is Argininosuccinate synthase (395 aa).

ATP-binding positions include 6-14 (AYSGGLDTS) and A33. Y84 serves as a coordination point for L-citrulline. G114 is an ATP binding site. T116, N120, and D121 together coordinate L-aspartate. An L-citrulline-binding site is contributed by N120. L-citrulline is bound by residues R124, S173, S182, E258, and Y270.

The protein belongs to the argininosuccinate synthase family. Type 1 subfamily. In terms of assembly, homotetramer.

It is found in the cytoplasm. It carries out the reaction L-citrulline + L-aspartate + ATP = 2-(N(omega)-L-arginino)succinate + AMP + diphosphate + H(+). Its pathway is amino-acid biosynthesis; L-arginine biosynthesis; L-arginine from L-ornithine and carbamoyl phosphate: step 2/3. The sequence is that of Argininosuccinate synthase from Rhodococcoides fascians (Rhodococcus fascians).